The sequence spans 146 residues: Large ribosomal subunit protein uL15 (146 aa).

A compositionally biased stretch (basic and acidic residues) spans methionine 1–arginine 13. The segment at methionine 1–glycine 52 is disordered. Composition is skewed to gly residues over residues arginine 21–alanine 31 and serine 42–glycine 52.

It belongs to the universal ribosomal protein uL15 family. As to quaternary structure, part of the 50S ribosomal subunit.

Binds to the 23S rRNA. This chain is Large ribosomal subunit protein uL15, found in Bacillus cereus (strain B4264).